A 180-amino-acid polypeptide reads, in one-letter code: Large ribosomal subunit protein uL5c (180 aa).

It belongs to the universal ribosomal protein uL5 family. Part of the 50S ribosomal subunit; contacts the 5S rRNA.

The protein resides in the plastid. The protein localises to the chloroplast. Binds 5S rRNA, forms part of the central protuberance of the 50S subunit. The chain is Large ribosomal subunit protein uL5c (rpl5) from Oedogonium cardiacum (Filamentous green alga).